Here is a 476-residue protein sequence, read N- to C-terminus: Aspartyl/glutamyl-tRNA(Asn/Gln) amidotransferase subunit B (476 aa).

It belongs to the GatB/GatE family. GatB subfamily. As to quaternary structure, heterotrimer of A, B and C subunits.

The catalysed reaction is L-glutamyl-tRNA(Gln) + L-glutamine + ATP + H2O = L-glutaminyl-tRNA(Gln) + L-glutamate + ADP + phosphate + H(+). It catalyses the reaction L-aspartyl-tRNA(Asn) + L-glutamine + ATP + H2O = L-asparaginyl-tRNA(Asn) + L-glutamate + ADP + phosphate + 2 H(+). Its function is as follows. Allows the formation of correctly charged Asn-tRNA(Asn) or Gln-tRNA(Gln) through the transamidation of misacylated Asp-tRNA(Asn) or Glu-tRNA(Gln) in organisms which lack either or both of asparaginyl-tRNA or glutaminyl-tRNA synthetases. The reaction takes place in the presence of glutamine and ATP through an activated phospho-Asp-tRNA(Asn) or phospho-Glu-tRNA(Gln). The chain is Aspartyl/glutamyl-tRNA(Asn/Gln) amidotransferase subunit B from Lactobacillus helveticus (strain DPC 4571).